A 1077-amino-acid chain; its full sequence is Adenylate cyclase type 4 (1077 aa).

The Cytoplasmic segment spans residues 1-28 (MARLFSPRPPPSEDLFYETYYSLSQQYP). Transmembrane regions (helical) follow at residues 29-50 (LLLLLLGIVLCALAALLAVAWA), 61-80 (FLTTVLCALGGFSLLLGLAS), 94-117 (GLVWVALLALGHAFLFTGGVVSAW), 120-138 (VSYFLFVIFTAYAMLPLGM), 141-162 (AAVAGLASSLSHLLVLGLYLGP), and 170-190 (LLPQLAANAVLFLCGNVAGVY). Topologically, residues 191-585 (HKALMERALR…YRLSAIPAFK (395 aa)) are cytoplasmic. Residues Asp278, Ile279, and Asp322 each contribute to the Mg(2+) site. ATP-binding positions include 278-283 (DIVGFT), 320-322 (LGD), and Arg366. Phosphoserine is present on Ser520. Thr536 carries the post-translational modification Phosphothreonine. Transmembrane regions (helical) follow at residues 586–607 (YYEACTFLVFLSNFIIQMLVTN), 611–633 (ALAITYSITFLLFLLILFVCFSE), and 664–687 (IALGTATILLVFAMAITSLFFFPT). The Extracellular segment spans residues 688–714 (SSDCPFQAPNVSSMISNLSWELPGSLP). N-linked (GlcNAc...) asparagine glycosylation is found at Asn697 and Asn704. Helical transmembrane passes span 715–736 (LISVPYSMHCCTLGFLSCSLFL), 744–764 (LLLLLLWLAASCSLFLHSHAW), and 791–807 (MGAISFFIFFFTLLVLA). At 808–1077 (RQNEYYCRLD…RTGPPSATLG (270 aa)) the chain is on the cytoplasmic side. Residues Lys925, 1005–1007 (DIW), 1012–1016 (NVASR), and Lys1052 each bind ATP.

The protein belongs to the adenylyl cyclase class-4/guanylyl cyclase family. Mg(2+) serves as cofactor. It depends on Mn(2+) as a cofactor. In terms of tissue distribution, detected in the zona glomerulosa and the zona fasciculata in the adrenal gland (at protein level).

It localises to the cell membrane. Its subcellular location is the cytoplasm. The enzyme catalyses ATP = 3',5'-cyclic AMP + diphosphate. With respect to regulation, activated by forskolin. Insensitive to calcium/calmodulin. Stimulated by GNAS and by the G-protein beta and gamma subunit complex. In terms of biological role, catalyzes the formation of the signaling molecule cAMP in response to G-protein signaling. This is Adenylate cyclase type 4 (ADCY4) from Homo sapiens (Human).